The following is a 446-amino-acid chain: N-succinylarginine dihydrolase (446 aa).

Residues 19–28, asparagine 110, and 137–138 each bind substrate; these read AGLSFGNVAS and HR. The active site involves glutamate 174. Arginine 213 lines the substrate pocket. Residue histidine 249 is part of the active site. Aspartate 251 and asparagine 364 together coordinate substrate. Cysteine 370 serves as the catalytic Nucleophile.

The protein belongs to the succinylarginine dihydrolase family. In terms of assembly, homodimer.

It carries out the reaction N(2)-succinyl-L-arginine + 2 H2O + 2 H(+) = N(2)-succinyl-L-ornithine + 2 NH4(+) + CO2. It functions in the pathway amino-acid degradation; L-arginine degradation via AST pathway; L-glutamate and succinate from L-arginine: step 2/5. Catalyzes the hydrolysis of N(2)-succinylarginine into N(2)-succinylornithine, ammonia and CO(2). This Burkholderia pseudomallei (strain 668) protein is N-succinylarginine dihydrolase.